The following is a 688-amino-acid chain: Putative proline--tRNA ligase YHR020W (688 aa).

Residue Ser149 is modified to Phosphoserine. A Phosphothreonine modification is found at Thr170. Residues 631–650 are disordered; that stretch reads ESSAKKDDGEEFEEDDKAPS. Ser655 carries the phosphoserine modification.

The protein belongs to the class-II aminoacyl-tRNA synthetase family.

The enzyme catalyses tRNA(Pro) + L-proline + ATP = L-prolyl-tRNA(Pro) + AMP + diphosphate. The polypeptide is Putative proline--tRNA ligase YHR020W (Saccharomyces cerevisiae (strain ATCC 204508 / S288c) (Baker's yeast)).